We begin with the raw amino-acid sequence, 219 residues long: MAESSGSPHRLLYKQVGSPHWKETFRQGCLERMRNSRHRLLNKYRQAAGSTPGTASDRLLVQEVMEEEWASLQSVENCPEALLQLELPLDLAVLQDIEQELCNEEKSIISEYEEDLEFDESCLRRMLAEWEANSLICPVCIKYNLRIMNSVVTCPCGLHIPVHSTDLTEQKLRACLEENVNEHSVHCPHTPVFSVTGGTEEKPSLLMNCLTCDTWAVIL.

A Phosphoserine modification is found at Ser-18. Residues 137-212 (CPVCIKYNLR…PSLLMNCLTC (76 aa)) form an RIP-type zinc finger. Positions 164 to 180 (STDLTEQKLRACLEENV) are mediates nuclear export.

Interacts with the RPA1 subunit of RPA complex. Post-translationally, sumoylated; required for localization in the nuclear PML body and transport of RPA complex in PML body. Upon UV irradiation and during S phase, it is desumoylated, releasing RPA complex that is translocated to sites of DNA damage. Sumoylation takes place at different Lys residues.

It is found in the nucleus. Its function is as follows. Mediates the import of RPA complex into the nucleus, possibly via some interaction with importin beta. Sumoylation mediates the localization of RPA complex into the PML body of the nucleus, thereby participating in RPA function in DNA metabolism. This chain is RPA-interacting protein (Rpain), found in Mus musculus (Mouse).